Reading from the N-terminus, the 640-residue chain is Threonine--tRNA ligase (640 aa).

One can recognise a TGS domain in the interval 1–61 (MPIITLPDGS…TNDAEIQIIT (61 aa)). The interval 242–533 (DHRKLGKKLS…LIENYSGNLP (292 aa)) is catalytic. Positions 333, 384, and 510 each coordinate Zn(2+).

The protein belongs to the class-II aminoacyl-tRNA synthetase family. In terms of assembly, homodimer. Requires Zn(2+) as cofactor.

Its subcellular location is the cytoplasm. The catalysed reaction is tRNA(Thr) + L-threonine + ATP = L-threonyl-tRNA(Thr) + AMP + diphosphate + H(+). In terms of biological role, catalyzes the attachment of threonine to tRNA(Thr) in a two-step reaction: L-threonine is first activated by ATP to form Thr-AMP and then transferred to the acceptor end of tRNA(Thr). Also edits incorrectly charged L-seryl-tRNA(Thr). The chain is Threonine--tRNA ligase from Prochlorococcus marinus (strain NATL1A).